Reading from the N-terminus, the 783-residue chain is Centrosomal protein of 89 kDa (783 aa).

The interval 28 to 49 is disordered; the sequence is PKAAVPRTPPPRSPNPSPERPR. Pro residues predominate over residues 34–45; the sequence is RTPPPRSPNPSP. The residue at position 50 (S50) is a Phosphoserine. Disordered regions lie at residues 63-157 and 176-226; these read GRTV…DDLY and DENI…DITG. A compositionally biased stretch (polar residues) spans 94–107; sequence ATTSQLRPRPNWQS. Composition is skewed to basic and acidic residues over residues 139–155 and 196–214; these read ELGD…HSDD and QQKD…KPPL. 2 coiled-coil regions span residues 234–333 and 369–719; these read EITR…SRYQ and LLLA…GELE.

The protein resides in the cytoplasm. Its subcellular location is the cytosol. It is found in the cytoskeleton. The protein localises to the microtubule organizing center. It localises to the centrosome. The protein resides in the spindle pole. Its subcellular location is the centriole. It is found in the mitochondrion intermembrane space. Functionally, required for ciliogenesis. Also plays a role in mitochondrial metabolism where it may modulate complex IV activity. This chain is Centrosomal protein of 89 kDa (CEP89), found in Homo sapiens (Human).